A 172-amino-acid polypeptide reads, in one-letter code: uncharacterized protein (172 aa).

Residues 1–22 (MKLFQLLLLVLTISSFIISNNG) form the signal peptide. Over 23–140 (LVESHQGRMH…FSYENSSNET (118 aa)) the chain is Extracellular. The segment at 27 to 69 (HQGRMHRGSGERHHRAGGNQQQPQPPSEQQVESSYNSNDDGSS) is disordered. The segment covering 29–42 (GRMHRGSGERHHRA) has biased composition (basic residues). Residues 53-69 (SEQQVESSYNSNDDGSS) show a composition bias toward low complexity. 2 N-linked (GlcNAc...) asparagine glycosylation sites follow: N135 and N138. Residues 141-161 (IVIYINPVTLVFTLVLLLTFI) form a helical membrane-spanning segment. At 162–172 (VLTITQSLRKY) the chain is on the cytoplasmic side.

Its subcellular location is the membrane. This is an uncharacterized protein from Dictyostelium discoideum (Social amoeba).